Consider the following 579-residue polypeptide: Adenine deaminase (579 aa).

The protein belongs to the metallo-dependent hydrolases superfamily. Adenine deaminase family. The cofactor is Mn(2+).

It catalyses the reaction adenine + H2O + H(+) = hypoxanthine + NH4(+). The protein is Adenine deaminase of Listeria welshimeri serovar 6b (strain ATCC 35897 / DSM 20650 / CCUG 15529 / CIP 8149 / NCTC 11857 / SLCC 5334 / V8).